Here is a 31-residue protein sequence, read N- to C-terminus: MEVNILAFIATALLILVPTAFLLIIYVKTAK.

The helical transmembrane segment at 5–25 threads the bilayer; sequence ILAFIATALLILVPTAFLLII.

This sequence belongs to the PsbM family. PSII is composed of 1 copy each of membrane proteins PsbA, PsbB, PsbC, PsbD, PsbE, PsbF, PsbH, PsbI, PsbJ, PsbK, PsbL, PsbM, PsbT, PsbX, PsbY, PsbZ, Psb30/Ycf12, at least 3 peripheral proteins of the oxygen-evolving complex and a large number of cofactors. It forms dimeric complexes.

Its subcellular location is the plastid membrane. Functionally, one of the components of the core complex of photosystem II (PSII). PSII is a light-driven water:plastoquinone oxidoreductase that uses light energy to abstract electrons from H(2)O, generating O(2) and a proton gradient subsequently used for ATP formation. It consists of a core antenna complex that captures photons, and an electron transfer chain that converts photonic excitation into a charge separation. This subunit is found at the monomer-monomer interface. This chain is Photosystem II reaction center protein M, found in Cuscuta exaltata (Tall dodder).